The chain runs to 249 residues: Probable transcriptional regulatory protein ZMO0153 (249 aa).

Belongs to the TACO1 family.

It is found in the cytoplasm. The sequence is that of Probable transcriptional regulatory protein ZMO0153 from Zymomonas mobilis subsp. mobilis (strain ATCC 31821 / ZM4 / CP4).